Consider the following 256-residue polypeptide: NH(3)-dependent NAD(+) synthetase (256 aa).

29 to 36 (GISGGIDS) serves as a coordination point for ATP. Aspartate 35 lines the Mg(2+) pocket. Residue arginine 115 participates in deamido-NAD(+) binding. Threonine 135 contacts ATP. Mg(2+) is bound at residue glutamate 140. Positions 148 and 155 each coordinate deamido-NAD(+). Residues lysine 164 and serine 186 each contribute to the ATP site. 245–246 (HK) serves as a coordination point for deamido-NAD(+).

This sequence belongs to the NAD synthetase family. Homodimer.

It catalyses the reaction deamido-NAD(+) + NH4(+) + ATP = AMP + diphosphate + NAD(+) + H(+). It functions in the pathway cofactor biosynthesis; NAD(+) biosynthesis; NAD(+) from deamido-NAD(+) (ammonia route): step 1/1. Functionally, catalyzes the ATP-dependent amidation of deamido-NAD to form NAD. Uses ammonia as a nitrogen source. The chain is NH(3)-dependent NAD(+) synthetase from Methanosarcina acetivorans (strain ATCC 35395 / DSM 2834 / JCM 12185 / C2A).